Reading from the N-terminus, the 1437-residue chain is Protein SUPPRESSOR OF npr1-1, CONSTITUTIVE 1 (1437 aa).

M1 is subject to N-acetylmethionine. A TIR domain is found at 19–182 (RRYDVFPSFR…ELAEDVLRKT (164 aa)). 28 to 33 (RGEDVR) contributes to the NAD(+) binding site. The active site involves E93. 23 LRR repeats span residues 554 to 576 (MRNLQYLEIGYYGDLPQSLVYLP), 577 to 598 (LKLRLLDWDDCPLKSLPSTFKA), 600 to 621 (YLVNLIMKYSKLEKLWEGTLPL), 622 to 645 (GSLKEMNLRYSNNLKEIPDLSLAI), 647 to 668 (LEELDLVGCKSLVTLPSSIQNA), 670 to 691 (KLIYLDMSDCKKLESFPTDLNL), 692 to 715 (ESLEYLNLTGCPNLRNFPAIKMGC), 781 to 805 (LGSLEGMDLSESENLTEIPDLSKAT), 807 to 828 (LESLILNNCKSLVTLPSTIGNL), 829 to 851 (HRLVRLEMKECTGLEVLPTDVNL), 852 to 875 (SSLETLDLSGCSSLRSFPLISTNI), 877 to 895 (WLYLENTAIEEIPSTIGNL), 897 to 918 (RLVRLEMKKCTGLEVLPTDVNL), 919 to 939 (SSLETLDLSGCSSLRSFPLIS), 940 to 962 (ESIKWLYLENTAIEEIPDLSKAT), 964 to 985 (LKNLKLNNCKSLVTLPTTIGNL), 1009 to 1029 (SSLMILDLSGCSSLRTFPLIS), 1030 to 1052 (TNIVWLYLENTAIEEIPSTIGNL), 1054 to 1075 (RLVKLEMKECTGLEVLPTDVNL), 1076 to 1096 (SSLMILDLSGCSSLRTFPLIS), 1097 to 1121 (TRIECLYLQNTAIEEVPCCIEDFTR), 1123 to 1143 (TVLMMYCCQRLKTISPNIFRL), and 1161 to 1185 (LSDATVVATMEDHVSCVPLSENIEY).

This sequence belongs to the disease resistance TIR-NB-LRR family. Homodimer. Interacts (via TIR domain) with TPR1. Interacts with EDS1. Interacts with SRFR1. Interacts with HSP90-3. Binds to MORC1/CRT1. Interacts with TRAF1B. Post-translationally, met-1 is specifically acetylated by N-terminal acetyltransferase complex A (NatA). The NatA-mediated acetylation serves as a degradation signal. Met-1 is specifically acetylated by N-terminal acetyltransferase complex B (NatB). The NatB-mediated acetylation stabilizes SNC1. Expressed in guard cells and epidermal cells, but not detected in mesophyll cells.

Its subcellular location is the cytoplasm. The protein resides in the microsome. It localises to the nucleus. It carries out the reaction NAD(+) + H2O = ADP-D-ribose + nicotinamide + H(+). In terms of biological role, disease resistance protein of the TIR-NB-LRR-type. Part of the RPP5 locus that contains a cluster of several paralogous disease resistance (R) genes. Resistance proteins guard the plant against pathogens that contain an appropriate avirulence protein via an indirect interaction with this avirulence protein. That triggers a defense system including the hypersensitive response, which restricts the pathogen growth. Probably acts as a NAD(+) hydrolase (NADase): in response to activation, catalyzes cleavage of NAD(+) into ADP-D-ribose (ADPR) and nicotinamide; NAD(+) cleavage triggering a defense system that promotes cell death. Expression regulated by MOS1 at chromatin level. Nuclear localization of SNC1 is essential for its activity. ABA deficiency can rescue high-temperature inhibition of SNC1-mediated defense responses. This is Protein SUPPRESSOR OF npr1-1, CONSTITUTIVE 1 from Arabidopsis thaliana (Mouse-ear cress).